Reading from the N-terminus, the 227-residue chain is NADH-quinone oxidoreductase subunit C (227 aa).

This sequence belongs to the complex I 30 kDa subunit family. NDH-1 is composed of 14 different subunits. Subunits NuoB, C, D, E, F, and G constitute the peripheral sector of the complex.

The protein localises to the cell inner membrane. It carries out the reaction a quinone + NADH + 5 H(+)(in) = a quinol + NAD(+) + 4 H(+)(out). NDH-1 shuttles electrons from NADH, via FMN and iron-sulfur (Fe-S) centers, to quinones in the respiratory chain. The immediate electron acceptor for the enzyme in this species is believed to be ubiquinone. Couples the redox reaction to proton translocation (for every two electrons transferred, four hydrogen ions are translocated across the cytoplasmic membrane), and thus conserves the redox energy in a proton gradient. In Legionella pneumophila (strain Paris), this protein is NADH-quinone oxidoreductase subunit C.